A 101-amino-acid chain; its full sequence is Urease subunit beta (101 aa).

This sequence belongs to the urease beta subunit family. Heterotrimer of UreA (gamma), UreB (beta) and UreC (alpha) subunits. Three heterotrimers associate to form the active enzyme.

Its subcellular location is the cytoplasm. The enzyme catalyses urea + 2 H2O + H(+) = hydrogencarbonate + 2 NH4(+). Its pathway is nitrogen metabolism; urea degradation; CO(2) and NH(3) from urea (urease route): step 1/1. This is Urease subunit beta from Sinorhizobium fredii (strain NBRC 101917 / NGR234).